The chain runs to 54 residues: uncharacterized protein (54 aa).

The interval 1-38 (MFPNSNGPNKMKALVAPSNSSTTSKTNNNNLPPNGRSS) is disordered. The span at 17–38 (PSNSSTTSKTNNNNLPPNGRSS) shows a compositional bias: low complexity.

This is an uncharacterized protein from Dictyostelium discoideum (Social amoeba).